An 826-amino-acid chain; its full sequence is Zinc phosphodiesterase ELAC protein 2 (826 aa).

The N-terminal 16 residues, 1–16 (MWALCSLLRSATGRTM), are a transit peptide targeting the mitochondrion. Residues 15 to 27 (TMSQGRTISQGSA) show a composition bias toward polar residues. 2 disordered regions span residues 15 to 53 (TMSQGRTISQGSARRQRPPKDPLRHLRTREKRGPSGSSG) and 187 to 231 (SEQR…VSQR). Residues Ser199, Ser208, Ser212, Ser229, Ser618, and Ser736 each carry the phosphoserine modification. A compositionally biased stretch (basic and acidic residues) spans 208–224 (SPERSSDSESNESEPHL). The tract at residues 798-826 (ALTDDLEDGEPQQKRAHTEEPQSKKVRAQ) is disordered. Over residues 808 to 820 (PQQKRAHTEEPQS) the composition is skewed to basic and acidic residues.

The protein belongs to the RNase Z family. In terms of assembly, homodimer. Interacts with PTCD1. The cofactor is Zn(2+).

The protein localises to the mitochondrion. It is found in the mitochondrion matrix. Its subcellular location is the mitochondrion nucleoid. It localises to the nucleus. It catalyses the reaction Endonucleolytic cleavage of RNA, removing extra 3' nucleotides from tRNA precursor, generating 3' termini of tRNAs. A 3'-hydroxy group is left at the tRNA terminus and a 5'-phosphoryl group is left at the trailer molecule.. Zinc phosphodiesterase, which displays mitochondrial tRNA 3'-processing endonuclease activity. Involved in tRNA maturation, by removing a 3'-trailer from precursor tRNA. Associates with mitochondrial DNA complexes at the nucleoids to initiate RNA processing and ribosome assembly. This Macaca fascicularis (Crab-eating macaque) protein is Zinc phosphodiesterase ELAC protein 2 (ELAC2).